Here is a 445-residue protein sequence, read N- to C-terminus: C-terminal-binding protein 2 (445 aa).

Arginine 22 is modified (asymmetric dimethylarginine). Residues serine 106, 186–191 (IGFGRT), aspartate 210, 243–249 (CNLNEHN), 270–272 (AAR), and aspartate 296 each bind NAD(+). Residue arginine 272 is part of the active site. Glutamate 301 is an active-site residue. Catalysis depends on histidine 321, which acts as the Proton donor. 321–324 (HTAW) provides a ligand contact to NAD(+). Residues 414–445 (THNLPTVAHPSQAPSPNQPTKHGDNREHPNEQ) form a disordered region. Phosphoserine is present on serine 428. Residues 434–445 (KHGDNREHPNEQ) show a composition bias toward basic and acidic residues.

The protein belongs to the D-isomer specific 2-hydroxyacid dehydrogenase family. In terms of assembly, interacts with the C-terminus of adenovirus E1A protein. Can form homodimers or heterodimers of CTBP1 and CTBP2. Interacts with HIPK2. Interacts with ZNF217, PNN, NRIP1 and WIZ. Interacts with PRDM16; represses white adipose tissue (WAT)-specific genes expression. Interacts with MCRIP1. In terms of tissue distribution, isoform 2 is specifically localized in synaptic ribbon (at protein level).

Its subcellular location is the nucleus. The protein localises to the synapse. Corepressor targeting diverse transcription regulators. Functions in brown adipose tissue (BAT) differentiation. Isoform 2 probably acts as a scaffold for specialized synapses. The protein is C-terminal-binding protein 2 (CTBP2) of Bos taurus (Bovine).